Reading from the N-terminus, the 206-residue chain is Large ribosomal subunit protein uL4 (206 aa).

Residues 49 to 79 (KVKTRSEISRTTKKMYKQKGTGNARHGAASA) form a disordered region.

Belongs to the universal ribosomal protein uL4 family. Part of the 50S ribosomal subunit.

Its function is as follows. One of the primary rRNA binding proteins, this protein initially binds near the 5'-end of the 23S rRNA. It is important during the early stages of 50S assembly. It makes multiple contacts with different domains of the 23S rRNA in the assembled 50S subunit and ribosome. Forms part of the polypeptide exit tunnel. The chain is Large ribosomal subunit protein uL4 from Methylobacterium sp. (strain 4-46).